An 852-amino-acid polypeptide reads, in one-letter code: Thrombospondin type-1 domain-containing protein 1 (852 aa).

A signal peptide spans 1–24 (MKPMLKDFSNLLLVVLCDYVLGEA). Topologically, residues 25 to 413 (EYLLLREPGH…QPQGPVKSNN (389 aa)) are extracellular. 7 N-linked (GlcNAc...) asparagine glycosylation sites follow: N39, N53, N58, N69, N80, N135, and N304. The TSP type-1 domain occupies 340–393 (TETWGLWQPWSQCSATCGDGVRERRRVCLTSFPSSPVCPGMSLEASLCSLEECA). 3 disulfides stabilise this stretch: C352-C387, C356-C392, and C367-C377. Residues 414-434 (IVTVTGISLCLFIIIATVLIT) traverse the membrane as a helical segment. At 435–852 (LWRRFGRPAK…STLSVEKLVI (418 aa)) the chain is on the cytoplasmic side. Disordered regions lie at residues 444–517 (KCST…ESFQ) and 624–799 (LIRK…RKDK). The residue at position 463 (S463) is a Phosphoserine. Basic residues predominate over residues 645-654 (ARNAHFRRTA). Residues 655 to 669 (SFHEARQARPFRERS) show a composition bias toward basic and acidic residues. A compositionally biased stretch (polar residues) spans 670–685 (MSTLTPRQAPAYSSRT). The segment covering 686-696 (RTCEQAEDRFR) has biased composition (basic and acidic residues). Polar residues-rich tracts occupy residues 766 to 778 (SHKSVSRKQSSPI) and 785 to 794 (QRVSSLSPSQ).

Part of a complex composed of THSD1, PTK2/FAK1, TLN1 and VCL. Interacts with TLN1.

The protein resides in the endosome membrane. It localises to the cell junction. The protein localises to the focal adhesion. It is found in the membrane. Its subcellular location is the secreted. In terms of biological role, is a positive regulator of nascent focal adhesion assembly, involved in the modulation of endothelial cell attachment to the extracellular matrix. This is Thrombospondin type-1 domain-containing protein 1 (THSD1) from Homo sapiens (Human).